A 754-amino-acid chain; its full sequence is ATP-dependent zinc metalloprotease FtsH (754 aa).

Over 1-9 (MKQRMKKPS) the chain is Cytoplasmic. The helical transmembrane segment at 10–30 (LGTFILILILIGILAYVLWQF) threads the bilayer. Residues 31–186 (LSPKLGYKSL…FDRPRGNFLS (156 aa)) are Extracellular-facing. The chain crosses the membrane as a helical span at residues 187–207 (SFIVPYIPFLLISLFGFWLFF). The Cytoplasmic segment spans residues 208-754 (RLSQNSQAGG…ESKIDSSKEQ (547 aa)). 277 to 284 (GPPGTGKT) contributes to the ATP binding site. Residue His499 participates in Zn(2+) binding. Residue Glu500 is part of the active site. His503 and Asp577 together coordinate Zn(2+). Residues 713–754 (QEKSYENEDQNQNSLEAINYNIDDQDDDKNDSESKIDSSKEQ) are disordered. Positions 743–754 (DSESKIDSSKEQ) are enriched in basic and acidic residues.

In the central section; belongs to the AAA ATPase family. This sequence in the C-terminal section; belongs to the peptidase M41 family. Homohexamer. The cofactor is Zn(2+).

It localises to the cell membrane. Functionally, acts as a processive, ATP-dependent zinc metallopeptidase for both cytoplasmic and membrane proteins. Plays a role in the quality control of integral membrane proteins. The chain is ATP-dependent zinc metalloprotease FtsH from Mesomycoplasma conjunctivae (strain ATCC 25834 / NCTC 10147 / HRC/581) (Mycoplasma conjunctivae).